Reading from the N-terminus, the 509-residue chain is Proton-gated ion channel subunit pbo-5 (509 aa).

Residues 1–21 (MTRLSILQHLLTFLILSKINA) form the signal peptide. Over 22-275 (TSTTESYFDS…ISLKRRPLFY (254 aa)) the chain is Extracellular. The cysteines at positions 193 and 207 are disulfide-linked. The next 3 membrane-spanning stretches (helical) occupy residues 276–296 (MVTLTFPSYIMCAISVVGLFA), 310–330 (LGVTAILTMAVLSLVVSEKVP), and 336–356 (VPLLVAYFLFNMVIVSIAAMT). Residues 357 to 487 (TGIVMKVHRL…GYVRISERLD (131 aa)) lie on the Cytoplasmic side of the membrane. A helical transmembrane segment spans residues 488 to 508 (ILFMFLFLSTVTIPVAVLFYL).

The protein belongs to the ligand-gated ion channel (TC 1.A.9) family. Acetylcholine receptor (TC 1.A.9.1) subfamily. The functional channel is a heterooligomer of pbo-5 and pbo-6. May self-associate to form homooligomers with negligible ion channel activity. In terms of tissue distribution, expressed in the posterior body muscles. Also detected in the RIFL, RIFR and RIS head neurons.

It is found in the membrane. Its function is as follows. Forms a proton-gated ion channel with pbo-6 that is activated by acidification of the posterior coelomic space, leading to posterior body wall muscle contraction (pBoc) during the defecation cycle. Probably by regulating the defecation motor program, required for fatty acid uptake by intestinal cells. Does not bind neurotransmitters such as acetylcholine, gamma-aminobutyric acid, glycine, serotonin, glutamate or choline. The chain is Proton-gated ion channel subunit pbo-5 from Caenorhabditis elegans.